The following is a 618-amino-acid chain: UvrABC system protein C (618 aa).

One can recognise a GIY-YIG domain in the interval aspartate 13–isoleucine 92. The region spanning leucine 204–isoleucine 239 is the UVR domain.

Belongs to the UvrC family. Interacts with UvrB in an incision complex.

The protein resides in the cytoplasm. Functionally, the UvrABC repair system catalyzes the recognition and processing of DNA lesions. UvrC both incises the 5' and 3' sides of the lesion. The N-terminal half is responsible for the 3' incision and the C-terminal half is responsible for the 5' incision. The protein is UvrABC system protein C of Clostridium botulinum (strain Langeland / NCTC 10281 / Type F).